The primary structure comprises 505 residues: Maturase K (505 aa).

This sequence belongs to the intron maturase 2 family. MatK subfamily.

Its subcellular location is the plastid. It localises to the chloroplast. Its function is as follows. Usually encoded in the trnK tRNA gene intron. Probably assists in splicing its own and other chloroplast group II introns. The chain is Maturase K from Ficus carica (Common fig).